Reading from the N-terminus, the 324-residue chain is NADH-ubiquinone oxidoreductase chain 1 (324 aa).

9 consecutive transmembrane segments (helical) span residues 9-29, 43-63, 75-95, 106-126, 146-166, 177-197, 237-257, 259-279, and 299-319; these read IINP…LTLL, PNIV…KLFI, FLFL…WAPM, LGVL…LGSG, ISYE…TGGF, SIWL…STLA, ILLM…IPAF, ELTA…FLWV, and FLPL…AMAG.

It belongs to the complex I subunit 1 family.

The protein localises to the mitochondrion inner membrane. It catalyses the reaction a ubiquinone + NADH + 5 H(+)(in) = a ubiquinol + NAD(+) + 4 H(+)(out). Functionally, core subunit of the mitochondrial membrane respiratory chain NADH dehydrogenase (Complex I) that is believed to belong to the minimal assembly required for catalysis. Complex I functions in the transfer of electrons from NADH to the respiratory chain. The immediate electron acceptor for the enzyme is believed to be ubiquinone. The polypeptide is NADH-ubiquinone oxidoreductase chain 1 (MT-ND1) (Salmo salar (Atlantic salmon)).